Reading from the N-terminus, the 415-residue chain is Cysteate synthase (415 aa).

Lys104 is subject to N6-(pyridoxal phosphate)lysine. 2 residues coordinate pyridoxal 5'-phosphate: Asn131 and Thr376.

Belongs to the threonine synthase family. Cysteate synthase subfamily. In terms of assembly, homotrimer. Pyridoxal 5'-phosphate is required as a cofactor.

It catalyses the reaction O-phospho-L-serine + sulfite + H(+) = L-cysteate + phosphate. It functions in the pathway cofactor biosynthesis; coenzyme M biosynthesis. Its function is as follows. Specifically catalyzes the beta-elimination of phosphate from L-phosphoserine and the beta-addition of sulfite to the dehydroalanine intermediate to produce L-cysteate. The sequence is that of Cysteate synthase from Methanothrix thermoacetophila (strain DSM 6194 / JCM 14653 / NBRC 101360 / PT) (Methanosaeta thermophila).